The primary structure comprises 716 residues: Fatty acid oxidation complex subunit alpha (716 aa).

The enoyl-CoA hydratase/isomerase stretch occupies residues 1 to 189 (MIYQSPTIQV…KVGAIDAVVA (189 aa)). Residue Asp-296 participates in substrate binding. Residues 311-716 (KNIDTAAVLG…AANNGSYYQS (406 aa)) are 3-hydroxyacyl-CoA dehydrogenase. Residues Met-324, Asp-343, 400-402 (VVE), Lys-407, and Ser-429 contribute to the NAD(+) site. Residue His-450 is the For 3-hydroxyacyl-CoA dehydrogenase activity of the active site. Asn-453 lines the NAD(+) pocket. Asn-500 is a binding site for substrate.

In the N-terminal section; belongs to the enoyl-CoA hydratase/isomerase family. This sequence in the C-terminal section; belongs to the 3-hydroxyacyl-CoA dehydrogenase family. In terms of assembly, heterotetramer of two alpha chains (FadB) and two beta chains (FadA).

It carries out the reaction a (3S)-3-hydroxyacyl-CoA + NAD(+) = a 3-oxoacyl-CoA + NADH + H(+). It catalyses the reaction a (3S)-3-hydroxyacyl-CoA = a (2E)-enoyl-CoA + H2O. The enzyme catalyses a 4-saturated-(3S)-3-hydroxyacyl-CoA = a (3E)-enoyl-CoA + H2O. The catalysed reaction is (3S)-3-hydroxybutanoyl-CoA = (3R)-3-hydroxybutanoyl-CoA. It carries out the reaction a (3Z)-enoyl-CoA = a 4-saturated (2E)-enoyl-CoA. It catalyses the reaction a (3E)-enoyl-CoA = a 4-saturated (2E)-enoyl-CoA. It participates in lipid metabolism; fatty acid beta-oxidation. Functionally, involved in the aerobic and anaerobic degradation of long-chain fatty acids via beta-oxidation cycle. Catalyzes the formation of 3-oxoacyl-CoA from enoyl-CoA via L-3-hydroxyacyl-CoA. It can also use D-3-hydroxyacyl-CoA and cis-3-enoyl-CoA as substrate. This Shewanella sediminis (strain HAW-EB3) protein is Fatty acid oxidation complex subunit alpha.